The primary structure comprises 328 residues: Transcription factor bHLH84 (328 aa).

The tract at residues 145–248 is disordered; that stretch reads QCESSKKRTR…ASRGAATDPQ (104 aa). Residues 220 to 229 are compositionally biased toward basic and acidic residues; it reads LSKEDGEDSK. The region spanning 243–292 is the bHLH domain; the sequence is AATDPQSLYARKRRERINERLRILQHLVPNGTKVDISTMLEEAVQYVKFL.

This sequence belongs to the bHLH protein family. As to quaternary structure, homodimer.

Its subcellular location is the nucleus. This Arabidopsis thaliana (Mouse-ear cress) protein is Transcription factor bHLH84 (BHLH84).